The primary structure comprises 370 residues: Probable neutral protease 2 homolog TRV_02539 (370 aa).

An N-terminal signal peptide occupies residues 1–19 (MQLVAALAALGALVAPAVA). Positions 20–188 (YPHAPMNETL…SIHSRALQKR (169 aa)) are excised as a propeptide. 2 disulfides stabilise this stretch: Cys-196-Cys-267 and Cys-274-Cys-292. His-316 contacts Zn(2+). Glu-317 is a catalytic residue. Residues His-320 and Asp-331 each coordinate Zn(2+).

Belongs to the peptidase M35 family. The cofactor is Zn(2+).

The protein localises to the secreted. The enzyme catalyses Preferential cleavage of bonds with hydrophobic residues in P1'. Also 3-Asn-|-Gln-4 and 8-Gly-|-Ser-9 bonds in insulin B chain.. Its function is as follows. Probable secreted metalloprotease that shows high activities on basic nuclear substrates such as histone and protamine. May be involved in virulence. The chain is Probable neutral protease 2 homolog TRV_02539 from Trichophyton verrucosum (strain HKI 0517).